Reading from the N-terminus, the 111-residue chain is UPF0060 membrane protein xcc-b100_1273 (111 aa).

A run of 4 helical transmembrane segments spans residues 8–28 (LLLFVATAVAELVGCYLPYLW), 34–54 (SVWLLLPAALSLAVFVWLLTL), 62–82 (VYAAYGGVYIATALLWLWWVD), and 91–111 (LLGAGCCLLGMAIIMFSPRSG).

Belongs to the UPF0060 family.

It is found in the cell inner membrane. The sequence is that of UPF0060 membrane protein xcc-b100_1273 from Xanthomonas campestris pv. campestris (strain B100).